The following is a 199-amino-acid chain: Putative DNA-directed RNA polymerase subunit L376 (199 aa).

Belongs to the eukaryotic RPB7/RPC8 RNA polymerase subunit family.

The protein localises to the virion. It carries out the reaction RNA(n) + a ribonucleoside 5'-triphosphate = RNA(n+1) + diphosphate. The protein is Putative DNA-directed RNA polymerase subunit L376 of Acanthamoeba polyphaga (Amoeba).